Here is a 557-residue protein sequence, read N- to C-terminus: Formate--tetrahydrofolate ligase (557 aa).

65-72 (TPAGEGKT) is a binding site for ATP.

It belongs to the formate--tetrahydrofolate ligase family.

The catalysed reaction is (6S)-5,6,7,8-tetrahydrofolate + formate + ATP = (6R)-10-formyltetrahydrofolate + ADP + phosphate. It participates in one-carbon metabolism; tetrahydrofolate interconversion. In Zymomonas mobilis subsp. mobilis (strain ATCC 31821 / ZM4 / CP4), this protein is Formate--tetrahydrofolate ligase.